The following is a 259-amino-acid chain: Ribosomal RNA small subunit methyltransferase J (259 aa).

S-adenosyl-L-methionine is bound by residues 101–102, 117–118, 153–154, and Asp-176; these read RD, ER, and SS.

This sequence belongs to the methyltransferase superfamily. RsmJ family.

It is found in the cytoplasm. The enzyme catalyses guanosine(1516) in 16S rRNA + S-adenosyl-L-methionine = N(2)-methylguanosine(1516) in 16S rRNA + S-adenosyl-L-homocysteine + H(+). In terms of biological role, specifically methylates the guanosine in position 1516 of 16S rRNA. This chain is Ribosomal RNA small subunit methyltransferase J, found in Vibrio vulnificus (strain CMCP6).